We begin with the raw amino-acid sequence, 211 residues long: Probable endo-1,4-beta-xylanase 5 (211 aa).

A signal peptide spans 1-16 (MKVTAAFASLLLTAFA). A GH11 domain is found at 19 to 210 (APEPVLVSRS…GAGSASVTIS (192 aa)). Glu-106 (nucleophile) is an active-site residue. The active-site Proton donor is Glu-197.

Belongs to the glycosyl hydrolase 11 (cellulase G) family.

The protein resides in the secreted. It catalyses the reaction Endohydrolysis of (1-&gt;4)-beta-D-xylosidic linkages in xylans.. It functions in the pathway glycan degradation; xylan degradation. Functionally, endo-1,4-beta-xylanase involved in the hydrolysis of xylan, a major structural heterogeneous polysaccharide found in plant biomass representing the second most abundant polysaccharide in the biosphere, after cellulose. In Aspergillus niger (strain ATCC MYA-4892 / CBS 513.88 / FGSC A1513), this protein is Probable endo-1,4-beta-xylanase 5 (XYN5).